Here is a 439-residue protein sequence, read N- to C-terminus: Tol-Pal system protein TolB (439 aa).

The first 24 residues, 1-24, serve as a signal peptide directing secretion; it reads MRNGMRKIIAGVFIFVFLISNLYA.

Belongs to the TolB family. The Tol-Pal system is composed of five core proteins: the inner membrane proteins TolA, TolQ and TolR, the periplasmic protein TolB and the outer membrane protein Pal. They form a network linking the inner and outer membranes and the peptidoglycan layer.

The protein resides in the periplasm. Its function is as follows. Part of the Tol-Pal system, which plays a role in outer membrane invagination during cell division and is important for maintaining outer membrane integrity. The chain is Tol-Pal system protein TolB from Francisella tularensis subsp. tularensis (strain FSC 198).